A 188-amino-acid chain; its full sequence is Ribosome-recycling factor (188 aa).

The protein belongs to the RRF family.

It is found in the cytoplasm. Responsible for the release of ribosomes from messenger RNA at the termination of protein biosynthesis. May increase the efficiency of translation by recycling ribosomes from one round of translation to another. The polypeptide is Ribosome-recycling factor (Gluconobacter oxydans (strain 621H) (Gluconobacter suboxydans)).